A 252-amino-acid chain; its full sequence is Large ribosomal subunit protein uL30 (252 aa).

The protein belongs to the universal ribosomal protein uL30 family.

In terms of biological role, binds to G-rich structures in 28S rRNA and in mRNAs. Plays a regulatory role in the translation apparatus; inhibits cell-free translation of mRNAs. In Drosophila melanogaster (Fruit fly), this protein is Large ribosomal subunit protein uL30 (RpL7).